We begin with the raw amino-acid sequence, 189 residues long: UPF0688 protein C1orf174 homolog (189 aa).

The interval 53 to 137 (QMAGDGGEAK…TTDPSVFFDE (85 aa)) is disordered. Basic and acidic residues-rich tracts occupy residues 59-73 (GEAK…HGEV) and 93-103 (APGERRGKENS).

Belongs to the UPF0688 family.

The protein resides in the nucleus. This chain is UPF0688 protein C1orf174 homolog, found in Danio rerio (Zebrafish).